A 351-amino-acid chain; its full sequence is N-acetyl-gamma-glutamyl-phosphate reductase (351 aa).

Residue Cys-150 is part of the active site.

The protein belongs to the NAGSA dehydrogenase family. Type 1 subfamily.

It localises to the cytoplasm. It catalyses the reaction N-acetyl-L-glutamate 5-semialdehyde + phosphate + NADP(+) = N-acetyl-L-glutamyl 5-phosphate + NADPH + H(+). It participates in amino-acid biosynthesis; L-arginine biosynthesis; N(2)-acetyl-L-ornithine from L-glutamate: step 3/4. Catalyzes the NADPH-dependent reduction of N-acetyl-5-glutamyl phosphate to yield N-acetyl-L-glutamate 5-semialdehyde. The sequence is that of N-acetyl-gamma-glutamyl-phosphate reductase from Heliobacterium modesticaldum (strain ATCC 51547 / Ice1).